The primary structure comprises 192 residues: uncharacterized protein (192 aa).

In terms of domain architecture, Nudix hydrolase spans 29 to 160 (HRQAAVLIPI…PLDIYRRGDS (132 aa)). A Nudix box motif is present at residues 67-89 (GAVDDTDTSVIAAALREAEEEVA). Mg(2+)-binding residues include E83 and E87.

The protein belongs to the Nudix hydrolase family. PCD1 subfamily. Mn(2+) is required as a cofactor. The cofactor is Mg(2+).

Its function is as follows. Probably mediates the hydrolysis of some nucleoside diphosphate derivatives. This is an uncharacterized protein from Escherichia fergusonii (strain ATCC 35469 / DSM 13698 / CCUG 18766 / IAM 14443 / JCM 21226 / LMG 7866 / NBRC 102419 / NCTC 12128 / CDC 0568-73).